Consider the following 576-residue polypeptide: Sulfite reductase [NADPH] hemoprotein beta-component (576 aa).

Residues Cys439, Cys445, Cys485, and Cys489 each contribute to the [4Fe-4S] cluster site. Residue Cys489 coordinates siroheme.

Belongs to the nitrite and sulfite reductase 4Fe-4S domain family. Alpha(8)-beta(8). The alpha component is a flavoprotein, the beta component is a hemoprotein. It depends on siroheme as a cofactor. The cofactor is [4Fe-4S] cluster.

It carries out the reaction hydrogen sulfide + 3 NADP(+) + 3 H2O = sulfite + 3 NADPH + 4 H(+). It participates in sulfur metabolism; hydrogen sulfide biosynthesis; hydrogen sulfide from sulfite (NADPH route): step 1/1. In terms of biological role, component of the sulfite reductase complex that catalyzes the 6-electron reduction of sulfite to sulfide. This is one of several activities required for the biosynthesis of L-cysteine from sulfate. The protein is Sulfite reductase [NADPH] hemoprotein beta-component of Aliivibrio fischeri (strain ATCC 700601 / ES114) (Vibrio fischeri).